Reading from the N-terminus, the 485-residue chain is Katanin p60 ATPase-containing subunit A1 (485 aa).

A disordered region spans residues 101–173 (HRSSPCVVRK…KNKAEAVETE (73 aa)). Residues 141-173 (NGDKGKPQKSKEKKENPSKPKEDKNKAEAVETE) show a composition bias toward basic and acidic residues. Residue 244–251 (GPPGTGKT) participates in ATP binding.

The protein belongs to the AAA ATPase family. Katanin p60 subunit A1 subfamily. As to quaternary structure, can homooligomerize into hexameric rings, which may be promoted by interaction with microtubules. Interacts with katnb1, which may serve as a targeting subunit.

Its subcellular location is the cytoplasm. The protein localises to the cytoskeleton. The protein resides in the microtubule organizing center. It is found in the centrosome. It localises to the spindle pole. Its subcellular location is the spindle. The enzyme catalyses n ATP + n H2O + a microtubule = n ADP + n phosphate + (n+1) alpha/beta tubulin heterodimers.. ATPase activity is stimulated by microtubules, which promote homooligomerization. ATP-dependent microtubule severing is stimulated by interaction with katnb1. Its function is as follows. Catalytic subunit of a complex which severs microtubules in an ATP-dependent manner. Microtubule severing may promote rapid reorganization of cellular microtubule arrays and the release of microtubules from the centrosome following nucleation. The protein is Katanin p60 ATPase-containing subunit A1 (katna1) of Danio rerio (Zebrafish).